We begin with the raw amino-acid sequence, 320 residues long: Biotin synthase (320 aa).

A Radical SAM core domain is found at 46 to 275 (NMGRRVDLCS…YAHIRYAGGR (230 aa)). The [4Fe-4S] cluster site is built by Cys-64, Cys-68, and Cys-71. [2Fe-2S] cluster is bound by residues Ser-108, Cys-140, Cys-200, and Arg-270.

This sequence belongs to the radical SAM superfamily. Biotin synthase family. Homodimer. The cofactor is [4Fe-4S] cluster. Requires [2Fe-2S] cluster as cofactor.

It carries out the reaction (4R,5S)-dethiobiotin + (sulfur carrier)-SH + 2 reduced [2Fe-2S]-[ferredoxin] + 2 S-adenosyl-L-methionine = (sulfur carrier)-H + biotin + 2 5'-deoxyadenosine + 2 L-methionine + 2 oxidized [2Fe-2S]-[ferredoxin]. The protein operates within cofactor biosynthesis; biotin biosynthesis; biotin from 7,8-diaminononanoate: step 2/2. Functionally, catalyzes the conversion of dethiobiotin (DTB) to biotin by the insertion of a sulfur atom into dethiobiotin via a radical-based mechanism. This chain is Biotin synthase, found in Acetivibrio thermocellus (strain ATCC 27405 / DSM 1237 / JCM 9322 / NBRC 103400 / NCIMB 10682 / NRRL B-4536 / VPI 7372) (Clostridium thermocellum).